The following is a 333-amino-acid chain: 4-hydroxy-3-methylbut-2-enyl diphosphate reductase (333 aa).

Cysteine 20 contributes to the [4Fe-4S] cluster binding site. (2E)-4-hydroxy-3-methylbut-2-enyl diphosphate is bound by residues histidine 49 and histidine 85. Positions 49 and 85 each coordinate dimethylallyl diphosphate. The isopentenyl diphosphate site is built by histidine 49 and histidine 85. Cysteine 107 serves as a coordination point for [4Fe-4S] cluster. Residue histidine 135 coordinates (2E)-4-hydroxy-3-methylbut-2-enyl diphosphate. Residue histidine 135 coordinates dimethylallyl diphosphate. An isopentenyl diphosphate-binding site is contributed by histidine 135. Glutamate 137 functions as the Proton donor in the catalytic mechanism. (2E)-4-hydroxy-3-methylbut-2-enyl diphosphate is bound at residue threonine 176. Cysteine 206 contributes to the [4Fe-4S] cluster binding site. 4 residues coordinate (2E)-4-hydroxy-3-methylbut-2-enyl diphosphate: serine 234, serine 235, asparagine 236, and serine 279. Dimethylallyl diphosphate-binding residues include serine 234, serine 235, asparagine 236, and serine 279. Isopentenyl diphosphate is bound by residues serine 234, serine 235, asparagine 236, and serine 279.

The protein belongs to the IspH family. [4Fe-4S] cluster serves as cofactor.

The catalysed reaction is isopentenyl diphosphate + 2 oxidized [2Fe-2S]-[ferredoxin] + H2O = (2E)-4-hydroxy-3-methylbut-2-enyl diphosphate + 2 reduced [2Fe-2S]-[ferredoxin] + 2 H(+). The enzyme catalyses dimethylallyl diphosphate + 2 oxidized [2Fe-2S]-[ferredoxin] + H2O = (2E)-4-hydroxy-3-methylbut-2-enyl diphosphate + 2 reduced [2Fe-2S]-[ferredoxin] + 2 H(+). It participates in isoprenoid biosynthesis; dimethylallyl diphosphate biosynthesis; dimethylallyl diphosphate from (2E)-4-hydroxy-3-methylbutenyl diphosphate: step 1/1. Its pathway is isoprenoid biosynthesis; isopentenyl diphosphate biosynthesis via DXP pathway; isopentenyl diphosphate from 1-deoxy-D-xylulose 5-phosphate: step 6/6. Catalyzes the conversion of 1-hydroxy-2-methyl-2-(E)-butenyl 4-diphosphate (HMBPP) into a mixture of isopentenyl diphosphate (IPP) and dimethylallyl diphosphate (DMAPP). Acts in the terminal step of the DOXP/MEP pathway for isoprenoid precursor biosynthesis. The sequence is that of 4-hydroxy-3-methylbut-2-enyl diphosphate reductase from Rhizobium johnstonii (strain DSM 114642 / LMG 32736 / 3841) (Rhizobium leguminosarum bv. viciae).